We begin with the raw amino-acid sequence, 327 residues long: Probable cell division protein WhiA (327 aa).

Residues S275–E308 constitute a DNA-binding region (H-T-H motif).

The protein belongs to the WhiA family.

Involved in cell division and chromosome segregation. This is Probable cell division protein WhiA from Corynebacterium glutamicum (strain R).